We begin with the raw amino-acid sequence, 234 residues long: MAKLTKRMRVIREKVDATKQYDINEAIALLKELATAKFNESVDVAVNLGIDARKSDQNVRGATVLPHGTGRSVRVAVFTQGPNAEAAKAAGAELVGMEDLADQIKKGEMNFDVVIASPDAMRVVGQLGQVLGPRGLMPNPKVGTVTPNVAEAVKNAKAGQVRYRNDKNGIIHTTIGKVDFDADKLKENLEALLVALKKAKPSQAKGVYIKKVSISTTMGAGVAVDQAGLSASAN.

The protein belongs to the universal ribosomal protein uL1 family. In terms of assembly, part of the 50S ribosomal subunit.

Its function is as follows. Binds directly to 23S rRNA. The L1 stalk is quite mobile in the ribosome, and is involved in E site tRNA release. Protein L1 is also a translational repressor protein, it controls the translation of the L11 operon by binding to its mRNA. In Salmonella agona (strain SL483), this protein is Large ribosomal subunit protein uL1.